Reading from the N-terminus, the 1259-residue chain is Trafficking protein particle complex II-specific subunit 130 homolog (1259 aa).

Ala2 is modified (N-acetylalanine). The disordered stretch occupies residues 479–526 (GNIPEMFDGRPSFTEGSGLEASPRTPSSLKVQAPPMSRTNSSPGNFES).

This sequence belongs to the TMEM1 family. Part of the multisubunit TRAPP (transport protein particle) II complex composed of BET3, BET5, TRS20, TRS23, TRS31, TRS33, TRS65, TRS85, TRS120 and TRS130.

It is found in the golgi apparatus. It localises to the trans-Golgi network. The protein resides in the early endosome. In terms of biological role, specific subunit of the TRAPP II complex, a highly conserved vesicle tethering complex that is required for the proper transport of proteins in post-Golgi trafficking pathways to the growing cell plate in mitotic active cells. Required for the polarized and selective transport of PIN2, but not PIN1, to the plasma membrane. Not required for ER-to-Golgi as well as biosynthetic and endocytic vacuolar transport. The protein is Trafficking protein particle complex II-specific subunit 130 homolog of Arabidopsis thaliana (Mouse-ear cress).